Consider the following 90-residue polypeptide: UPF0223 protein SH1855 (90 aa).

The protein belongs to the UPF0223 family.

The chain is UPF0223 protein SH1855 from Staphylococcus haemolyticus (strain JCSC1435).